Consider the following 192-residue polypeptide: Protein Syd (192 aa).

This sequence belongs to the Syd family.

Its subcellular location is the cell inner membrane. Interacts with the SecY protein in vivo. May bind preferentially to an uncomplexed state of SecY, thus functioning either as a chelating agent for excess SecY in the cell or as a regulatory factor that negatively controls the translocase function. This chain is Protein Syd, found in Hahella chejuensis (strain KCTC 2396).